The primary structure comprises 469 residues: Glutamate--tRNA ligase (469 aa).

Positions 11–21 (PSPTGFIHLGN) match the 'HIGH' region motif. Positions 118–131 (GEKPRYDGTWRPEP) are enriched in basic and acidic residues. Residues 118 to 138 (GEKPRYDGTWRPEPGKVLPEP) form a disordered region. Residues 243–247 (KMSKR) carry the 'KMSKS' region motif. Position 246 (Lys246) interacts with ATP.

It belongs to the class-I aminoacyl-tRNA synthetase family. Glutamate--tRNA ligase type 1 subfamily. As to quaternary structure, monomer.

The protein resides in the cytoplasm. It catalyses the reaction tRNA(Glu) + L-glutamate + ATP = L-glutamyl-tRNA(Glu) + AMP + diphosphate. Its function is as follows. Catalyzes the attachment of glutamate to tRNA(Glu) in a two-step reaction: glutamate is first activated by ATP to form Glu-AMP and then transferred to the acceptor end of tRNA(Glu). In Burkholderia thailandensis (strain ATCC 700388 / DSM 13276 / CCUG 48851 / CIP 106301 / E264), this protein is Glutamate--tRNA ligase.